The primary structure comprises 807 residues: Lysyl oxidase homolog 3B (807 aa).

The signal sequence occupies residues 1–24; it reads MELHQWCRHIIVFLLNVWIPSCFA. SRCR domains lie at 49–150, 175–288, 309–409, 419–470, and 476–579; these read FRLS…VICK, VRLR…VSCV, TRLK…VRCN, VRIL…LGYA, and VRLS…VICS. Intrachain disulfides connect C75/C139, C88/C149, C119/C129, C207/C277, C220/C287, C254/C264, C334/C398, C347/C408, and C378/C388. N272 carries an N-linked (GlcNAc...) asparagine glycan. N-linked (GlcNAc...) asparagine glycosylation is present at N392. 2 disulfide bridges follow: C514–C578 and C547–C557. Residue N536 is glycosylated (N-linked (GlcNAc...) asparagine). An N-linked (GlcNAc...) asparagine glycan is attached at N679. A cross-link (lysine tyrosylquinone (Lys-Tyr)) is located at residues 688 to 724; sequence KASFCLEDTDCDEGVSKRYKCANFGEQGITVGCWDLY. Y724 carries the 2',4',5'-topaquinone modification.

The protein belongs to the lysyl oxidase family. Requires Cu cation as cofactor. Lysine tyrosylquinone residue serves as cofactor. Post-translationally, the lysine tyrosylquinone cross-link (LTQ) is generated by condensation of the epsilon-amino group of a lysine with a topaquinone produced by oxidation of tyrosine.

The protein resides in the secreted. It is found in the extracellular space. Its subcellular location is the cytoplasm. The protein localises to the nucleus. It carries out the reaction L-lysyl-[protein] + O2 + H2O = (S)-2-amino-6-oxohexanoyl-[protein] + H2O2 + NH4(+). The catalysed reaction is N(6)-acetyl-L-lysyl-[protein] + O2 + H2O = acetamide + (S)-2-amino-6-oxohexanoyl-[protein] + H2O2. Protein-lysine 6-oxidase that mediates the oxidation of peptidyl lysine residues to allysine in target proteins. Catalyzes the post-translational oxidative deamination of peptidyl lysine residues in precursors of elastin and different types of collagens, a prerequisite in the formation of cross-links between collagens and elastin. Can mediate oxidation of lysine residues that are acetylated. Also able to catalyze deacetylation of lysine residues. Required for maturation of neural crest derived cartilage elements. This Danio rerio (Zebrafish) protein is Lysyl oxidase homolog 3B.